Here is a 273-residue protein sequence, read N- to C-terminus: NADPH-dependent 7-cyano-7-deazaguanine reductase (273 aa).

81-83 (VES) contributes to the substrate binding site. 83–84 (SK) contributes to the NADPH binding site. Residue cysteine 179 is the Thioimide intermediate of the active site. Aspartate 186 serves as the catalytic Proton donor. A substrate-binding site is contributed by 218 to 219 (AE). 247-248 (RG) contributes to the NADPH binding site.

It belongs to the GTP cyclohydrolase I family. QueF type 2 subfamily. As to quaternary structure, homodimer.

It localises to the cytoplasm. It catalyses the reaction 7-aminomethyl-7-carbaguanine + 2 NADP(+) = 7-cyano-7-deazaguanine + 2 NADPH + 3 H(+). It functions in the pathway tRNA modification; tRNA-queuosine biosynthesis. In terms of biological role, catalyzes the NADPH-dependent reduction of 7-cyano-7-deazaguanine (preQ0) to 7-aminomethyl-7-deazaguanine (preQ1). The sequence is that of NADPH-dependent 7-cyano-7-deazaguanine reductase from Rickettsia akari (strain Hartford).